The following is a 167-amino-acid chain: Stress-related protein (167 aa).

It belongs to the REF/SRPP family.

Plays a role in plant defense. The polypeptide is Stress-related protein (SRP) (Phaseolus vulgaris (Kidney bean)).